A 123-amino-acid chain; its full sequence is Large ribosomal subunit protein uL18 (123 aa).

It belongs to the universal ribosomal protein uL18 family. Part of the 50S ribosomal subunit; part of the 5S rRNA/L5/L18/L25 subcomplex. Contacts the 5S and 23S rRNAs.

In terms of biological role, this is one of the proteins that bind and probably mediate the attachment of the 5S RNA into the large ribosomal subunit, where it forms part of the central protuberance. The protein is Large ribosomal subunit protein uL18 of Chlamydia caviae (strain ATCC VR-813 / DSM 19441 / 03DC25 / GPIC) (Chlamydophila caviae).